The chain runs to 83 residues: MYB-like transcription factor ETC1 (83 aa).

The Myb-like domain maps to 35-72 (AQEEEDLICRMYKLVGERWDLIAGRIPGRTAEEIERFW).

In terms of tissue distribution, expressed in developing trichomes and non-root hair cells.

It is found in the nucleus. MYB-type transcription factor involved in epidermal cell fate specification. Acts as a negative regulator of trichome development, by mediating lateral inhibition. Promotes the formation of hair developing cells in H position in root epidermis, probably by inhibiting non-hair cell formation. This Arabidopsis thaliana (Mouse-ear cress) protein is MYB-like transcription factor ETC1 (ETC1).